We begin with the raw amino-acid sequence, 607 residues long: Autophagy-related protein 16-1 (607 aa).

Residues 13–43 (WKRHIAEELRRRDRLQRQAFEEIILQYTKLL) are interaction with ATG5. Positions 79–230 (DSQLQEMAQL…QKELAEAAKE (152 aa)) form a coiled coil. S139 carries the phosphoserine modification. Residues 207 to 230 (AENEKDSRRRQARLQKELAEAAKE) form a WIPI2-binding region. Residues 230-242 (EPLPVEQDDDIEV) are RB1CC1-binding. Residues S269 and S287 each carry the phosphoserine modification. The short motif at 296-299 (DIMD) is the Caspase cleavage element. WD repeat units follow at residues 320–359 (AHDGEVNAVQFSPGSRLLATGGMDRRVKLWEAFGDKCEFK), 364–403 (GSNAGITSIEFDSAGAYLLAASNDFASRIWTVDDYRLRHT), 406–445 (GHSGKVLSAKFLLDNARIVSGSHDRTLKLWDLRSKVCIKT), 447–484 (FAGSSCNDIVCTEQCVMSGHFDKKIRFWDIRSESVVRE), 486–525 (ELLGKITALDLNPERTELLSCSRDDLLKVIDLRTNAVKQT), 532–573 (KCGS…KVLS), and 575–607 (QHSSSINAVAWAPSGLHVVSVDKGSRAVLWAQP).

This sequence belongs to the WD repeat ATG16 family. In terms of assembly, homodimer. Homooligomer. Heterooligomer with ATG16L2. Interacts with WIPI1. Interacts with WIPI2. Interacts with RB1CC1; the interaction is required for ULK1 complex-dependent autophagy. Interacts with ATG5. Part of the minor complex composed of 4 sets of ATG12-ATG5 and ATG16L1 (400 kDa); this complex interacts with ATG3 leading to disruption of ATG7 interaction and promotion of ATG8-like proteins lipidation. Part of the major complex composed of 8 sets of ATG12-ATG5 and ATG16L1 (800 kDa). Interacts with RAB33B (GTP- and GDP-bound forms); the complex consists of a tetramer where two RAB33B molecules bind independently one molecule of the ATG16L1 homodimer; the interaction promotes ATG12-ATG5-ATG16L1 complex recruitment to phagophores. Interacts (via WD repeats) with TMEM59; the interaction mediates unconventional autophagic activity of TMEM59. Interacts with TLR2. Interacts (via WD repeats) with MEFV. Interacts (via N-terminal) with CLTC. Interacts with NOD1. Interacts with NOD2. Interacts with TUFM. Interacts with TRIM16. Interacts (via WD repeats) with SPATA33. Interacts with Irgm1. In terms of processing, proteolytic cleavage by activated CASP3 leads to degradation and may regulate autophagy upon cellular stress and apoptotic stimuli. Phosphorylation at Ser-139 promotes association with the ATG12-ATG5 conjugate to form the ATG12-ATG5-ATG16L1 complex. As to expression, widely expressed. Expressed in the testis and sperm midpiece (at protein level). Expressed in liver. In terms of tissue distribution, highly expressed in liver. As to expression, expressed in brain.

Its subcellular location is the cytoplasm. The protein localises to the preautophagosomal structure membrane. The protein resides in the endosome membrane. It is found in the lysosome membrane. In terms of biological role, plays an essential role in both canonical and non-canonical autophagy: interacts with ATG12-ATG5 to mediate the lipidation to ATG8 family proteins (MAP1LC3A, MAP1LC3B, MAP1LC3C, GABARAPL1, GABARAPL2 and GABARAP). Acts as a molecular hub, coordinating autophagy pathways via distinct domains that support either canonical or non-canonical signaling. During canonical autophagy, interacts with ATG12-ATG5 to mediate the conjugation of phosphatidylethanolamine (PE) to ATG8 proteins, to produce a membrane-bound activated form of ATG8. Thereby, controls the elongation of the nascent autophagosomal membrane. As part of the ATG8 conjugation system with ATG5 and ATG12, required for recruitment of LRRK2 to stressed lysosomes and induction of LRRK2 kinase activity in response to lysosomal stress. Also involved in non-canonical autophagy, a parallel pathway involving conjugation of ATG8 proteins to single membranes at endolysosomal compartments, probably by catalyzing conjugation of phosphatidylserine (PS) to ATG8. Non-canonical autophagy plays a key role in epithelial cells to limit lethal infection by influenza A (IAV) virus. Regulates mitochondrial antiviral signaling (MAVS)-dependent type I interferon (IFN-I) production. Negatively regulates NOD1- and NOD2-driven inflammatory cytokine response. Instead, promotes an autophagy-dependent antibacterial pathway together with NOD1 or NOD2. Plays a role in regulating morphology and function of Paneth cell. In Mus musculus (Mouse), this protein is Autophagy-related protein 16-1.